A 172-amino-acid polypeptide reads, in one-letter code: Small ribosomal subunit protein uS5 (172 aa).

Residues L16–V79 form the S5 DRBM domain.

Belongs to the universal ribosomal protein uS5 family. As to quaternary structure, part of the 30S ribosomal subunit. Contacts proteins S4 and S8.

Functionally, with S4 and S12 plays an important role in translational accuracy. In terms of biological role, located at the back of the 30S subunit body where it stabilizes the conformation of the head with respect to the body. The polypeptide is Small ribosomal subunit protein uS5 (Pelodictyon phaeoclathratiforme (strain DSM 5477 / BU-1)).